The primary structure comprises 267 residues: Hydroxynaphthalene reductase-like protein Arp2 (267 aa).

Residues Ile25, Asn45, Asp71, and Asn98 each contribute to the NADP(+) site. Catalysis depends on proton donor residues Ser147 and Ser148. Tyr162, Lys166, Val195, and Thr197 together coordinate NADP(+). Tyr162 serves as the catalytic Proton acceptor. The active-site Lowers pKa of active site Tyr is Lys166.

The protein belongs to the short-chain dehydrogenases/reductases (SDR) family.

In terms of biological role, hydroxynaphthalene reductase-like protein; part of the Pks2 gene cluster that mediates the formation of infectious structures (appressoria), enabling these fungi to kill insects faster. The product of the Pks2 gene cluster is different from the one of Pks1 and has still not been identified. In Metarhizium guizhouense (strain ARSEF 977), this protein is Hydroxynaphthalene reductase-like protein Arp2.